A 259-amino-acid chain; its full sequence is Probable ABC transporter permease protein RP096 (259 aa).

5 helical membrane-spanning segments follow: residues 13-35 (TIKF…SSII), 49-69 (LFIG…SGAV), 148-168 (VIAA…IGVM), 195-215 (PIDV…ISII), and 237-257 (AVVN…ELFF).

It belongs to the MlaE permease family.

Its subcellular location is the cell inner membrane. Could be part of an ABC transporter complex. The chain is Probable ABC transporter permease protein RP096 from Rickettsia prowazekii (strain Madrid E).